Reading from the N-terminus, the 60-residue chain is UPF0434 protein Pnap_1922 (60 aa).

It belongs to the UPF0434 family.

In Polaromonas naphthalenivorans (strain CJ2), this protein is UPF0434 protein Pnap_1922.